Reading from the N-terminus, the 469-residue chain is Protein POLLENLESS 3-LIKE 1 (469 aa).

Residues M1 to S20 form a disordered region. TPR repeat units follow at residues D88 to E121, D124 to D157, and A184 to N217. Residues R139–A191 adopt a coiled-coil conformation. Residues N314–P338 are compositionally biased toward polar residues. Positions N314–R339 are disordered.

It belongs to the MS5 protein family. As to expression, expressed in floral and vegetative organs. Also barely detectable in leaves and stems.

It is found in the nucleus. Its function is as follows. Probably involved in the regulation of cell division. This Arabidopsis thaliana (Mouse-ear cress) protein is Protein POLLENLESS 3-LIKE 1.